Consider the following 94-residue polypeptide: Co-chaperonin GroES (94 aa).

Belongs to the GroES chaperonin family. Heptamer of 7 subunits arranged in a ring. Interacts with the chaperonin GroEL.

It is found in the cytoplasm. Together with the chaperonin GroEL, plays an essential role in assisting protein folding. The GroEL-GroES system forms a nano-cage that allows encapsulation of the non-native substrate proteins and provides a physical environment optimized to promote and accelerate protein folding. GroES binds to the apical surface of the GroEL ring, thereby capping the opening of the GroEL channel. In Clostridium perfringens (strain SM101 / Type A), this protein is Co-chaperonin GroES.